We begin with the raw amino-acid sequence, 223 residues long: Octanoyltransferase (223 aa).

Residues 31–216 (GQIGDTLLLL…QIGEVFALEP (186 aa)) form the BPL/LPL catalytic domain. Residues 76–83 (RGGEVTYH), 145–147 (AIG), and 159–161 (GLA) contribute to the substrate site. C177 (acyl-thioester intermediate) is an active-site residue.

The protein belongs to the LipB family.

It is found in the cytoplasm. The catalysed reaction is octanoyl-[ACP] + L-lysyl-[protein] = N(6)-octanoyl-L-lysyl-[protein] + holo-[ACP] + H(+). Its pathway is protein modification; protein lipoylation via endogenous pathway; protein N(6)-(lipoyl)lysine from octanoyl-[acyl-carrier-protein]: step 1/2. In terms of biological role, catalyzes the transfer of endogenously produced octanoic acid from octanoyl-acyl-carrier-protein onto the lipoyl domains of lipoate-dependent enzymes. Lipoyl-ACP can also act as a substrate although octanoyl-ACP is likely to be the physiological substrate. In Chloroflexus aurantiacus (strain ATCC 29366 / DSM 635 / J-10-fl), this protein is Octanoyltransferase.